The following is a 1214-amino-acid chain: Protein charlatan (1214 aa).

Disordered regions lie at residues 1 to 20, 213 to 238, and 250 to 284; these read MATLIPVNGGHPAASGQSSN, HVNQQQQQQQQPHQSTPKSKKHRQEH, and SANAAQNLAQSTPTSAPSNSSGGSTSSSGGGGGRK. Positions 258 to 276 are enriched in low complexity; that stretch reads AQSTPTSAPSNSSGGSTSS. 2 consecutive C2H2-type zinc fingers follow at residues 305–327 and 333–356; these read YACTHCPYSTDRRDLYTRHENIH and FQCYACLKQFNRADHVKKHFLRMH. Disordered stretches follow at residues 367-397 and 463-488; these read RRHVSAGSGSSGSGSSGSGSHHSGGRGNVTI and PVASSSSGSSGSHGGNGNGGSGSGLL. Gly residues predominate over residues 473-485; that stretch reads GSHGGNGNGGSGS. 2 C2H2-type zinc fingers span residues 496–518 and 522–545; these read FTCCYCPWSGADKWGLKRHLNTH and FVCLLCDYKAARSERLATHVLKVH. Disordered stretches follow at residues 741 to 790, 848 to 946, and 1062 to 1084; these read SASS…ATSP, NDED…SGPS, and LSTPRRSPKKAAPAHSNSASNAS. 4 stretches are compositionally biased toward low complexity: residues 855-871, 885-896, 923-946, and 1071-1084; these read QQHQPHQQHHSQQQQQQ, NNNNNNNSNNNN, SPGTAAVSVAAAAATSPPSISGPS, and KAAPAHSNSASNAS.

Expressed in the PNS and CNS. In early blastoderm stages, it is ubiquitously expressed, then, before stage 5, it disappears from the poles of the embryo and faint stripes are visible. At stage 5, it also accumulates in the dorsal region, cephalic furrow ectodermal patches between the tracheal pits, where neurons of the PNS appear. In older embryos (stage 15) a strong expression is mostly restricted to the central nervous system (CNS) and PNS. In PNS, the pattern suggests that expression occur in many of the neurons of the ventral, lateral and dorsal clusters of neurons. In third instar wing disks, it is expressed in rows of cells on either side of the prospective anterior wing margin and in groups of cells that coincide with proneural clusters of ac/sc expression. Also expressed independently of ac/sc in certain areas of the disk, such as the postnotum and posterior dorsal proximal wing. Expressed in the proneural clusters of the leg disks and in the eye/antenna disk.

The protein localises to the nucleus. Its function is as follows. Probable transcription factor involved in the development of the adult pattern of macrochaetae. Required for accumulation of achaete (ac) and scute (sc) in proneural clusters. Probably acts by binding to the proneural cluster-specific enhancers of the ac/sc complex and increasing enhancer efficiency, thereby acting as a stimulator of ac/sc expression in proneural clusters. Also required for correct development of the embryonic/larval peripheral nervous system (PNS). The polypeptide is Protein charlatan (chn) (Drosophila melanogaster (Fruit fly)).